The following is a 224-amino-acid chain: Probable C-&gt;U-editing enzyme APOBEC-2 (224 aa).

The interval 1-25 (MAQKEEAAAATEAASQNGEDLENLD) is disordered. Residues Glu60 and His98 each contribute to the Zn(2+) site. In terms of domain architecture, CMP/dCMP-type deaminase spans 64 to 169 (GRNKTFLCYV…LEIQDALKKL (106 aa)). Glu100 functions as the Proton donor in the catalytic mechanism. 2 residues coordinate Zn(2+): Cys128 and Cys131.

Belongs to the cytidine and deoxycytidylate deaminase family. In terms of assembly, homotetramer. Zn(2+) serves as cofactor.

The catalysed reaction is cytidine(6666) in apoB mRNA + H2O + H(+) = uridine(6666) in apoB mRNA + NH4(+). Probable C to U editing enzyme whose physiological substrate is not yet known. Does not display detectable apoB mRNA editing. Has a low intrinsic cytidine deaminase activity. May play a role in the epigenetic regulation of gene expression through the process of active DNA demethylation. This chain is Probable C-&gt;U-editing enzyme APOBEC-2 (APOBEC2), found in Pongo pygmaeus (Bornean orangutan).